A 393-amino-acid chain; its full sequence is Proteasome-activating nucleotidase (393 aa).

Residues 14–53 are a coiled coil; that stretch reads SDEVQLVRLLEEKIKSLQIEIENLRKELNYYKAEMEKMLS. ATP contacts are provided by residues 178–183 and Tyr317; that span reads GTGKTM. The tract at residues 391 to 393 is docks into pockets in the proteasome alpha-ring to cause gate opening; sequence KYS.

The protein belongs to the AAA ATPase family. Homohexamer. The hexameric complex has a two-ring architecture resembling a top hat that caps the 20S proteasome core at one or both ends. Upon ATP-binding, the C-terminus of PAN interacts with the alpha-rings of the proteasome core by binding to the intersubunit pockets.

Its subcellular location is the cytoplasm. ATPase which is responsible for recognizing, binding, unfolding and translocation of substrate proteins into the archaeal 20S proteasome core particle. Is essential for opening the gate of the 20S proteasome via an interaction with its C-terminus, thereby allowing substrate entry and access to the site of proteolysis. Thus, the C-termini of the proteasomal ATPase function like a 'key in a lock' to induce gate opening and therefore regulate proteolysis. Unfolding activity requires energy from ATP hydrolysis, whereas ATP binding alone promotes ATPase-20S proteasome association which triggers gate opening, and supports translocation of unfolded substrates. The sequence is that of Proteasome-activating nucleotidase from Saccharolobus islandicus (strain M.16.27) (Sulfolobus islandicus).